Reading from the N-terminus, the 317-residue chain is DNA-directed RNA polymerase subunit alpha (317 aa).

The alpha N-terminal domain (alpha-NTD) stretch occupies residues M1–A234. Residues E249–N317 form an alpha C-terminal domain (alpha-CTD) region.

Belongs to the RNA polymerase alpha chain family. Homodimer. The RNAP catalytic core consists of 2 alpha, 1 beta, 1 beta' and 1 omega subunit. When a sigma factor is associated with the core the holoenzyme is formed, which can initiate transcription.

The catalysed reaction is RNA(n) + a ribonucleoside 5'-triphosphate = RNA(n+1) + diphosphate. DNA-dependent RNA polymerase catalyzes the transcription of DNA into RNA using the four ribonucleoside triphosphates as substrates. This chain is DNA-directed RNA polymerase subunit alpha, found in Mesoplasma florum (strain ATCC 33453 / NBRC 100688 / NCTC 11704 / L1) (Acholeplasma florum).